A 196-amino-acid polypeptide reads, in one-letter code: uncharacterized protein (196 aa).

Residues 1-10 (MPGMVPPHVP) are compositionally biased toward pro residues. Disordered stretches follow at residues 1–118 (MPGM…EGSG) and 176–196 (TEQAAPPVCPAPASRRLSAPG). Residues 25-45 (PVAPQVPSPGGAPGQGPYPYS) show a composition bias toward low complexity. A compositionally biased stretch (polar residues) spans 54–69 (LDTSGKNLTEQNSYSN).

This is an uncharacterized protein from Homo sapiens (Human).